A 479-amino-acid chain; its full sequence is Adenylate kinase 8 (479 aa).

Adenylate kinase stretches follow at residues 58-258 (PRIV…TYVQ) and 269-471 (PRVL…SGII). An ATP-binding site is contributed by 67-72 (ASGKTT). The NMP 1 stretch occupies residues 87–113 (TLENLILNEFSYTATEARRLYLQRKTV). AMP is bound by residues 140–143 (GIPE), Gln-147, and Arg-203. The LID 1 stretch occupies residues 177–206 (GKRIDPQTGEIYHTTFDWPPESEIQNRLMV). Residue 278 to 283 (GSGKSL) coordinates ATP. The NMP 2 stretch occupies residues 298–327 (CCGQLLKEAVADRTTFGELIQPFFEKEMAV). AMP contacts are provided by residues 325–327 (MAV), 354–357 (GVPR), and Gln-361. The segment at 391-424 (LRRIDPVTGERYHLMYKPPPTMEIQARLLQNPKD) is LID 2. Arg-392 is a binding site for ATP.

Belongs to the adenylate kinase family. As to quaternary structure, interacts with CFAP45 and CFAP52; CFAP45 and AK8 dimerization may create a cavity at the interface of the dimer that can accommodate AMP. In terms of tissue distribution, expressed in respiratory cells (at protein level).

It is found in the cytoplasm. Its subcellular location is the cytosol. The protein localises to the cytoskeleton. The protein resides in the cilium axoneme. It catalyses the reaction AMP + ATP = 2 ADP. The enzyme catalyses a 2'-deoxyribonucleoside 5'-diphosphate + ATP = a 2'-deoxyribonucleoside 5'-triphosphate + ADP. The catalysed reaction is a ribonucleoside 5'-diphosphate + ATP = a ribonucleoside 5'-triphosphate + ADP. Nucleoside monophosphate (NMP) kinase that catalyzes the reversible transfer of the terminal phosphate group between nucleoside triphosphates and monophosphates. Has highest activity toward AMP, and weaker activity toward dAMP, CMP and dCMP. Also displays broad nucleoside diphosphate kinase activity. The sequence is that of Adenylate kinase 8 (AK8) from Homo sapiens (Human).